We begin with the raw amino-acid sequence, 650 residues long: MNNLKYLKLLAKEFPTIEQAANKIISLTSLSVLPKGTEYFLSDLHGQYDSFNRIIKSASGNTRIKIDLEFKDKLSESRKNQLANLIYDPKTIINITKENDEYTETWIRDTIFYLIRIAKRVASKYSRQKVRNQTPFYYRDLIDEMLNIQYESLNKKEYFNQLLDSIIKIEVSENFIITLCELIQDLNIDWLHIVGDIFDRGKRPDIIMDTLIAKKDVDIQYGNHDVTWIGAYLGSYVNACNVVRNAISYNNFQSLEDGYGINLRLLSTLADESYYDDPCERFKVRILDDNKHSETDLLHAARMHKAISIIQFKLENQLFKRNPEFEQLDRLYLERIDFKNGIYKDANGKAHALLDIKFPTVDPDNPLELTPSEQEVVECISKSFRTSHRLKEHMDFLFSYGSVYKIANSNLLFHGCIPMNKDGSFEEFTYQSNTYSGKSLLDFFEGIINSARNMDDNDPDRQTALDFFWYMWCGPKSPMFGKSKISTFENFFITDKDVRKEVSNPYFSLSKIEKYADKIFEEFNMNPETSHIINGHVPVKSINGEKPVSANGKTYVIDGGISEAYQKKTGIAGYTLTFNSHHLAIAKHKNFQVMESVHGAYTPEVTITEEFPKRMLIKDTDEGEEILELIEDLESLIDAYRSGTIQQNSN.

This sequence belongs to the FBPase class 3 family. Mn(2+) is required as a cofactor.

It carries out the reaction beta-D-fructose 1,6-bisphosphate + H2O = beta-D-fructose 6-phosphate + phosphate. The protein operates within carbohydrate biosynthesis; gluconeogenesis. This chain is Fructose-1,6-bisphosphatase class 3, found in Finegoldia magna (strain ATCC 29328 / DSM 20472 / WAL 2508) (Peptostreptococcus magnus).